A 515-amino-acid chain; its full sequence is Glucose-6-phosphate 1-dehydrogenase (515 aa).

The residue at position 2 (A2) is an N-acetylalanine. At S8 the chain carries Phosphoserine. T10 carries the phosphothreonine modification. Residues 38–45 (GASGDLAK) and R72 contribute to the NADP(+) site. At K89 the chain carries N6-acetyllysine. Y147 and K171 together coordinate NADP(+). Residues K171, 201–205 (HYLGK), E239, and D258 contribute to the D-glucose 6-phosphate site. Position 171 is an N6-(2-hydroxyisobutyryl)lysine; alternate (K171). Position 171 is an N6-acetyllysine; alternate (K171). H263 (proton acceptor) is an active-site residue. R357 provides a ligand contact to NADP(+). Residues K360 and R365 each contribute to the D-glucose 6-phosphate site. Residues K366, R370, and R393 each coordinate NADP(+). Q395 is a D-glucose 6-phosphate binding site. Residues 401–403 (YTK) and 421–423 (DLT) contribute to the NADP(+) site. N6-acetyllysine is present on K403. Residue K432 is modified to N6-acetyllysine. R487 serves as a coordination point for NADP(+). K497 carries the post-translational modification N6-acetyllysine. Positions 503 and 509 each coordinate NADP(+). Y503 is modified (phosphotyrosine).

The protein belongs to the glucose-6-phosphate dehydrogenase family. In terms of assembly, homotetramer; dimer of dimers. Interacts with SIRT2; the interaction is enhanced by H(2)O(2) treatment. Forms a ternary complex with ALDOB and TP53; this interaction is direct. ALDOB stabilizes the complex inhibiting G6PD activity and keeping oxidative pentose phosphate metabolism in check. Post-translationally, acetylated by ELP3 at Lys-403; acetylation inhibits its homodimerization and enzyme activity. Deacetylated by SIRT2 at Lys-403; deacetylation stimulates its enzyme activity.

It localises to the cytoplasm. It is found in the cytosol. The protein localises to the membrane. The enzyme catalyses D-glucose 6-phosphate + NADP(+) = 6-phospho-D-glucono-1,5-lactone + NADPH + H(+). The protein operates within carbohydrate degradation; pentose phosphate pathway; D-ribulose 5-phosphate from D-glucose 6-phosphate (oxidative stage): step 1/3. Its function is as follows. Cytosolic glucose-6-phosphate dehydrogenase that catalyzes the first and rate-limiting step of the oxidative branch within the pentose phosphate pathway/shunt, an alternative route to glycolysis for the dissimilation of carbohydrates and a major source of reducing power and metabolic intermediates for fatty acid and nucleic acid biosynthetic processes. This is Glucose-6-phosphate 1-dehydrogenase (G6pdx) from Rattus norvegicus (Rat).